Reading from the N-terminus, the 502-residue chain is Aspartyl/glutamyl-tRNA(Asn/Gln) amidotransferase subunit B (502 aa).

The disordered stretch occupies residues threonine 272–aspartate 293.

Belongs to the GatB/GatE family. GatB subfamily. Heterotrimer of A, B and C subunits.

The enzyme catalyses L-glutamyl-tRNA(Gln) + L-glutamine + ATP + H2O = L-glutaminyl-tRNA(Gln) + L-glutamate + ADP + phosphate + H(+). The catalysed reaction is L-aspartyl-tRNA(Asn) + L-glutamine + ATP + H2O = L-asparaginyl-tRNA(Asn) + L-glutamate + ADP + phosphate + 2 H(+). Functionally, allows the formation of correctly charged Asn-tRNA(Asn) or Gln-tRNA(Gln) through the transamidation of misacylated Asp-tRNA(Asn) or Glu-tRNA(Gln) in organisms which lack either or both of asparaginyl-tRNA or glutaminyl-tRNA synthetases. The reaction takes place in the presence of glutamine and ATP through an activated phospho-Asp-tRNA(Asn) or phospho-Glu-tRNA(Gln). The sequence is that of Aspartyl/glutamyl-tRNA(Asn/Gln) amidotransferase subunit B from Paenarthrobacter aurescens (strain TC1).